The sequence spans 64 residues: Large ribosomal subunit protein bL35 (64 aa).

The segment at 20-42 (GRVKREKMYGSHNLEKKNRKRTR) is disordered. Basic and acidic residues predominate over residues 25–35 (EKMYGSHNLEK).

The protein belongs to the bacterial ribosomal protein bL35 family.

The protein is Large ribosomal subunit protein bL35 of Chlorobium phaeobacteroides (strain BS1).